The primary structure comprises 433 residues: Deoxyguanosinetriphosphate triphosphohydrolase-like protein 2 (433 aa).

An HD domain is found at 61 to 248 (RLTHSLEVAQ…METADDIAYT (188 aa)).

Belongs to the dGTPase family. Type 2 subfamily.

The polypeptide is Deoxyguanosinetriphosphate triphosphohydrolase-like protein 2 (Deinococcus radiodurans (strain ATCC 13939 / DSM 20539 / JCM 16871 / CCUG 27074 / LMG 4051 / NBRC 15346 / NCIMB 9279 / VKM B-1422 / R1)).